The chain runs to 383 residues: Probable aspartate/prephenate aminotransferase (383 aa).

3 residues coordinate L-aspartate: Gly-39, Trp-125, and Asn-175. The residue at position 234 (Lys-234) is an N6-(pyridoxal phosphate)lysine. Arg-361 contributes to the L-aspartate binding site.

Belongs to the class-I pyridoxal-phosphate-dependent aminotransferase family. In terms of assembly, homodimer. Requires pyridoxal 5'-phosphate as cofactor.

It localises to the cytoplasm. It catalyses the reaction L-aspartate + 2-oxoglutarate = oxaloacetate + L-glutamate. It carries out the reaction L-arogenate + oxaloacetate = prephenate + L-aspartate. Its function is as follows. Catalyzes the reversible conversion of aspartate and 2-oxoglutarate to glutamate and oxaloacetate. Can also transaminate prephenate in the presence of aspartate. This Thermus aquaticus protein is Probable aspartate/prephenate aminotransferase (aspC).